Reading from the N-terminus, the 1066-residue chain is Cytoplasmic dynein 2 intermediate chain 1 (1066 aa).

2 disordered regions span residues 22-366 and 381-408; these read LWAI…ENAR and YEDD…LEEL. Serine 30 bears the Phosphoserine mark. Composition is skewed to basic and acidic residues over residues 30 to 135, 147 to 171, 180 to 256, 264 to 308, and 316 to 336; these read SKEE…EELR, ETRD…RSEE, DEDR…EERH, GFHF…KRDG, and NLVR…HEEG. Serine 247 is subject to Phosphoserine. 2 stretches are compositionally biased toward acidic residues: residues 351 to 362 and 381 to 397; these read ETVEIEKEETDL and YEDD…ESSN. Basic and acidic residues predominate over residues 399 to 408; the sequence is PESREKLEEL. The tract at residues 473–552 is binding to the DYNLT2B-DYNLT1/DYNLT3 dimer; it reads ASHRQKSRTQ…DIQTEEIETR (80 aa). WD repeat units lie at residues 694 to 734, 775 to 821, 907 to 947, and 952 to 992; these read ICES…RLHY, VHKK…KADI, IRPV…PLLQ, and TDSH…LGPV.

Belongs to the dynein light intermediate chain family. As to quaternary structure, intermediate chain of the cytoplasmic dynein complex 2, a multisubunit complex, composed at least of eleven different proteins. The cytoplasmic dynein 2 complex consists of two catalytic heavy chains (HCs) and a number of non-catalytic subunits presented by intermediate chains (ICs), light intermediate chains (LICs) and light chains (LCs). Among them, a heavy chain (DYNC2H1), two intermediate chains (DYNC2I2 and DYNC2I1), a light intermediate chain (DYNC2LI1), and a light chain (DYNLT2B) are unique to the cytoplasmic dynein complex 2, but a subset of the light chains are also shared by dynein-1 and dynein-2 complexes. Interacts with DYNC2I2; their C-terminal domains each bind a copy of the heavy chain, and their extended N-terminal regions are held together by an array of light chain dimers. Interacts with DYNLT2B. Interacts (via the N-terminal half) with DYNLT2B-DYNLT1 dimer or with DYNLT2B-DYNLT3 dimer; this interaction is crucial for retrograde trafficking of ciliary proteins. In terms of tissue distribution, expressed in chondrocytes (at protein level).

It localises to the cell projection. It is found in the cilium. Its subcellular location is the cytoplasm. The protein localises to the cytoskeleton. The protein resides in the microtubule organizing center. It localises to the centrosome. In terms of biological role, acts as one of several non-catalytic accessory components of the cytoplasmic dynein 2 complex (dynein-2 complex), a motor protein complex that drives the movement of cargos along microtubules within cilia and flagella in concert with the intraflagellar transport (IFT) system. DYNC2I1 plays a major role in retrograde ciliary protein trafficking in cilia and flagella. Also requires to maintain a functional transition zone. The protein is Cytoplasmic dynein 2 intermediate chain 1 of Homo sapiens (Human).